A 217-amino-acid polypeptide reads, in one-letter code: Phosphatidylserine decarboxylase proenzyme (217 aa).

Residue Ser-183 is the Schiff-base intermediate with substrate; via pyruvic acid of the active site. At Ser-183 the chain carries Pyruvic acid (Ser); by autocatalysis.

The protein belongs to the phosphatidylserine decarboxylase family. PSD-A subfamily. As to quaternary structure, heterodimer of a large membrane-associated beta subunit and a small pyruvoyl-containing alpha subunit. The cofactor is pyruvate. In terms of processing, is synthesized initially as an inactive proenzyme. Formation of the active enzyme involves a self-maturation process in which the active site pyruvoyl group is generated from an internal serine residue via an autocatalytic post-translational modification. Two non-identical subunits are generated from the proenzyme in this reaction, and the pyruvate is formed at the N-terminus of the alpha chain, which is derived from the carboxyl end of the proenzyme. The post-translation cleavage follows an unusual pathway, termed non-hydrolytic serinolysis, in which the side chain hydroxyl group of the serine supplies its oxygen atom to form the C-terminus of the beta chain, while the remainder of the serine residue undergoes an oxidative deamination to produce ammonia and the pyruvoyl prosthetic group on the alpha chain.

The protein resides in the cell membrane. It catalyses the reaction a 1,2-diacyl-sn-glycero-3-phospho-L-serine + H(+) = a 1,2-diacyl-sn-glycero-3-phosphoethanolamine + CO2. The protein operates within phospholipid metabolism; phosphatidylethanolamine biosynthesis; phosphatidylethanolamine from CDP-diacylglycerol: step 2/2. Its function is as follows. Catalyzes the formation of phosphatidylethanolamine (PtdEtn) from phosphatidylserine (PtdSer). The sequence is that of Phosphatidylserine decarboxylase proenzyme from Cupriavidus metallidurans (strain ATCC 43123 / DSM 2839 / NBRC 102507 / CH34) (Ralstonia metallidurans).